The chain runs to 264 residues: 3-methyl-2-oxobutanoate hydroxymethyltransferase (264 aa).

Mg(2+) contacts are provided by Asp45 and Asp84. Residues 45 to 46 (DS), Asp84, and Lys112 each bind 3-methyl-2-oxobutanoate. Glu114 is a binding site for Mg(2+). The active-site Proton acceptor is the Glu181.

It belongs to the PanB family. In terms of assembly, homodecamer; pentamer of dimers. The cofactor is Mg(2+).

It localises to the cytoplasm. The catalysed reaction is 3-methyl-2-oxobutanoate + (6R)-5,10-methylene-5,6,7,8-tetrahydrofolate + H2O = 2-dehydropantoate + (6S)-5,6,7,8-tetrahydrofolate. Its pathway is cofactor biosynthesis; (R)-pantothenate biosynthesis; (R)-pantoate from 3-methyl-2-oxobutanoate: step 1/2. Its function is as follows. Catalyzes the reversible reaction in which hydroxymethyl group from 5,10-methylenetetrahydrofolate is transferred onto alpha-ketoisovalerate to form ketopantoate. In Escherichia coli O7:K1 (strain IAI39 / ExPEC), this protein is 3-methyl-2-oxobutanoate hydroxymethyltransferase.